The primary structure comprises 169 residues: Superoxide dismutase [Cu-Zn] 1 (169 aa).

An N-terminal signal peptide occupies residues 1–18 (MFEQWDALCAVLFSFSIA). Positions 65, 67, and 83 each coordinate Cu cation. A disulfide bridge connects residues Cys-72 and Cys-165. Zn(2+) contacts are provided by His-83, His-91, His-100, and Asp-103. His-145 contacts Cu cation.

Belongs to the Cu-Zn superoxide dismutase family. Requires Cu cation as cofactor. The cofactor is Zn(2+).

It catalyses the reaction 2 superoxide + 2 H(+) = H2O2 + O2. Functionally, destroys radicals which are normally produced within the cells and which are toxic to biological systems. The polypeptide is Superoxide dismutase [Cu-Zn] 1 (sodC1) (Aquifex aeolicus (strain VF5)).